The chain runs to 317 residues: 4-hydroxy-3-methylbut-2-enyl diphosphate reductase (317 aa).

Position 12 (cysteine 12) interacts with [4Fe-4S] cluster. Residues histidine 41 and histidine 74 each coordinate (2E)-4-hydroxy-3-methylbut-2-enyl diphosphate. Positions 41 and 74 each coordinate dimethylallyl diphosphate. Residues histidine 41 and histidine 74 each coordinate isopentenyl diphosphate. Cysteine 97 contributes to the [4Fe-4S] cluster binding site. Histidine 125 provides a ligand contact to (2E)-4-hydroxy-3-methylbut-2-enyl diphosphate. Histidine 125 contacts dimethylallyl diphosphate. Residue histidine 125 coordinates isopentenyl diphosphate. Glutamate 127 functions as the Proton donor in the catalytic mechanism. Threonine 168 is a binding site for (2E)-4-hydroxy-3-methylbut-2-enyl diphosphate. Cysteine 198 is a binding site for [4Fe-4S] cluster. Positions 226, 227, 228, and 270 each coordinate (2E)-4-hydroxy-3-methylbut-2-enyl diphosphate. Serine 226, serine 227, asparagine 228, and serine 270 together coordinate dimethylallyl diphosphate. Positions 226, 227, 228, and 270 each coordinate isopentenyl diphosphate.

It belongs to the IspH family. In terms of assembly, homodimer. [4Fe-4S] cluster is required as a cofactor.

It catalyses the reaction isopentenyl diphosphate + 2 oxidized [2Fe-2S]-[ferredoxin] + H2O = (2E)-4-hydroxy-3-methylbut-2-enyl diphosphate + 2 reduced [2Fe-2S]-[ferredoxin] + 2 H(+). The catalysed reaction is dimethylallyl diphosphate + 2 oxidized [2Fe-2S]-[ferredoxin] + H2O = (2E)-4-hydroxy-3-methylbut-2-enyl diphosphate + 2 reduced [2Fe-2S]-[ferredoxin] + 2 H(+). The protein operates within isoprenoid biosynthesis; dimethylallyl diphosphate biosynthesis; dimethylallyl diphosphate from (2E)-4-hydroxy-3-methylbutenyl diphosphate: step 1/1. Its pathway is isoprenoid biosynthesis; isopentenyl diphosphate biosynthesis via DXP pathway; isopentenyl diphosphate from 1-deoxy-D-xylulose 5-phosphate: step 6/6. In terms of biological role, catalyzes the conversion of 1-hydroxy-2-methyl-2-(E)-butenyl 4-diphosphate (HMBPP) into a mixture of isopentenyl diphosphate (IPP) and dimethylallyl diphosphate (DMAPP). Acts in the terminal step of the DOXP/MEP pathway for isoprenoid precursor biosynthesis. This Edwardsiella ictaluri (strain 93-146) protein is 4-hydroxy-3-methylbut-2-enyl diphosphate reductase.